Reading from the N-terminus, the 185-residue chain is Ribosome-recycling factor (185 aa).

Belongs to the RRF family.

Its subcellular location is the cytoplasm. In terms of biological role, responsible for the release of ribosomes from messenger RNA at the termination of protein biosynthesis. May increase the efficiency of translation by recycling ribosomes from one round of translation to another. The polypeptide is Ribosome-recycling factor (Corynebacterium glutamicum (strain ATCC 13032 / DSM 20300 / JCM 1318 / BCRC 11384 / CCUG 27702 / LMG 3730 / NBRC 12168 / NCIMB 10025 / NRRL B-2784 / 534)).